Reading from the N-terminus, the 115-residue chain is Putative membrane protein insertion efficiency factor (115 aa).

The protein belongs to the UPF0161 family.

It localises to the cell membrane. Its function is as follows. Could be involved in insertion of integral membrane proteins into the membrane. This Mycobacterium avium (strain 104) protein is Putative membrane protein insertion efficiency factor.